Reading from the N-terminus, the 197-residue chain is Xanthine phosphoribosyltransferase (197 aa).

The xanthine site is built by L20 and N27. 128–132 (ANGQA) is a 5-phospho-alpha-D-ribose 1-diphosphate binding site. Xanthine is bound at residue K156.

It belongs to the purine/pyrimidine phosphoribosyltransferase family. Xpt subfamily. In terms of assembly, homodimer.

The protein localises to the cytoplasm. The enzyme catalyses XMP + diphosphate = xanthine + 5-phospho-alpha-D-ribose 1-diphosphate. The protein operates within purine metabolism; XMP biosynthesis via salvage pathway; XMP from xanthine: step 1/1. Converts the preformed base xanthine, a product of nucleic acid breakdown, to xanthosine 5'-monophosphate (XMP), so it can be reused for RNA or DNA synthesis. In Bacillus cytotoxicus (strain DSM 22905 / CIP 110041 / 391-98 / NVH 391-98), this protein is Xanthine phosphoribosyltransferase.